The primary structure comprises 472 residues: Doublesex- and mab-3-related transcription factor 3 (472 aa).

The DM DNA-binding region spans 29–76 (CARCRNHGVLSWLKGHKRYCRFKDCTCEKCILIIERQRVMAAQVALRR). Disordered regions lie at residues 89–128 (DSLR…AELA) and 155–191 (EERL…GCFT). The segment covering 95–123 (PGPPPPGDAVAAPQPPPASQPSQPQPPRP) has biased composition (pro residues). Over residues 155-179 (EERLGDGKSADNTEVFSDKDTDQRS) the composition is skewed to basic and acidic residues. Residues 249 to 284 (RPPLEVLKKIFPNQKPTVLELILKGCGGDLVSAVEV) form the DMA domain. The disordered stretch occupies residues 430–472 (TEDPRISIPDDGCPFVSKQSIYTEDDYDERSDSSDSRTLNTSS).

The protein belongs to the DMRT family. As to quaternary structure, may homodimerize. As to expression, expressed in testis.

Its subcellular location is the nucleus. In terms of biological role, probable transcription factor that plays a role in configuring the spinal circuits controlling stride in vertebrates. Involved in neuronal specification within specific subdivision of spinal cord neurons and in the development of a coordinated locomotor network controlling limb movements. May regulate transcription during sexual development. This chain is Doublesex- and mab-3-related transcription factor 3 (DMRT3), found in Homo sapiens (Human).